A 164-amino-acid polypeptide reads, in one-letter code: UPF0304 protein PC1_2778 (164 aa).

It belongs to the UPF0304 family.

This is UPF0304 protein PC1_2778 from Pectobacterium carotovorum subsp. carotovorum (strain PC1).